The primary structure comprises 400 residues: Acetate kinase (400 aa).

Asn10 is a Mg(2+) binding site. Lys17 contacts ATP. Arg91 is a substrate binding site. The active-site Proton donor/acceptor is Asp148. ATP is bound by residues 208 to 212 (HLGNG), 283 to 285 (DCR), and 331 to 335 (GIGEN). Residue Glu385 coordinates Mg(2+).

The protein belongs to the acetokinase family. Homodimer. The cofactor is Mg(2+). It depends on Mn(2+) as a cofactor.

Its subcellular location is the cytoplasm. The catalysed reaction is acetate + ATP = acetyl phosphate + ADP. The protein operates within metabolic intermediate biosynthesis; acetyl-CoA biosynthesis; acetyl-CoA from acetate: step 1/2. In terms of biological role, catalyzes the formation of acetyl phosphate from acetate and ATP. Can also catalyze the reverse reaction. The chain is Acetate kinase from Shewanella frigidimarina (strain NCIMB 400).